The chain runs to 89 residues: Elongation factor 1-beta (89 aa).

Belongs to the EF-1-beta/EF-1-delta family.

Promotes the exchange of GDP for GTP in EF-1-alpha/GDP, thus allowing the regeneration of EF-1-alpha/GTP that could then be used to form the ternary complex EF-1-alpha/GTP/AAtRNA. This Methanothermobacter thermautotrophicus (strain ATCC 29096 / DSM 1053 / JCM 10044 / NBRC 100330 / Delta H) (Methanobacterium thermoautotrophicum) protein is Elongation factor 1-beta (ef1b).